Consider the following 236-residue polypeptide: 5'-methylthioadenosine/S-adenosylhomocysteine nucleosidase (236 aa).

Glu12 (proton acceptor) is an active-site residue. Residues Gly78, Ile153, and 174–175 (ME) contribute to the substrate site. Asp198 (proton donor) is an active-site residue.

It belongs to the PNP/UDP phosphorylase family. MtnN subfamily.

The catalysed reaction is S-adenosyl-L-homocysteine + H2O = S-(5-deoxy-D-ribos-5-yl)-L-homocysteine + adenine. The enzyme catalyses S-methyl-5'-thioadenosine + H2O = 5-(methylsulfanyl)-D-ribose + adenine. It catalyses the reaction 5'-deoxyadenosine + H2O = 5-deoxy-D-ribose + adenine. It participates in amino-acid biosynthesis; L-methionine biosynthesis via salvage pathway; S-methyl-5-thio-alpha-D-ribose 1-phosphate from S-methyl-5'-thioadenosine (hydrolase route): step 1/2. Functionally, catalyzes the irreversible cleavage of the glycosidic bond in both 5'-methylthioadenosine (MTA) and S-adenosylhomocysteine (SAH/AdoHcy) to adenine and the corresponding thioribose, 5'-methylthioribose and S-ribosylhomocysteine, respectively. Also cleaves 5'-deoxyadenosine, a toxic by-product of radical S-adenosylmethionine (SAM) enzymes, into 5-deoxyribose and adenine. This is 5'-methylthioadenosine/S-adenosylhomocysteine nucleosidase from Shewanella baltica (strain OS185).